The chain runs to 338 residues: Large ribosomal subunit protein uL3 (338 aa).

4 disordered regions span residues 1–44, 151–170, 206–259, and 312–338; these read MPQP…GFAG, AVPS…VGGG, VTKG…GQTG, and FRPA…SNQG. Polar residues predominate over residues 22 to 31; that stretch reads SETPRFNSWP. Residues 220 to 237 show a composition bias toward basic residues; it reads GVQKRKGKHARQGWRRRI. The span at 247–259 shows a compositional bias: polar residues; it reads RVRSTVPQQGQTG.

Belongs to the universal ribosomal protein uL3 family. In terms of assembly, part of the 50S ribosomal subunit. Forms a cluster with proteins L14 and L24e. Interacts weakly with protein L13.

In terms of biological role, one of the primary rRNA binding proteins, it binds directly near the 3'-end of the 23S rRNA, where it nucleates assembly of the 50S subunit. The polypeptide is Large ribosomal subunit protein uL3 (rpl3) (Haloarcula marismortui (strain ATCC 43049 / DSM 3752 / JCM 8966 / VKM B-1809) (Halobacterium marismortui)).